The sequence spans 513 residues: MTKLVNEMILVLDFGSQYNQLITRRIREFGVYSELHPHTLTAEEIKEMNPKGIILSGGPNSVYDEGSFRCDEKIFELDIPVLGICYGMQLMTHYLGGKVEAASQREYGKANIQIQGTPDLFKDLPEEQVVWMSHGDLVVEVPEGFTVDATSHHCPNSAMSKADKNWYGVQFHPEVRHSEYGNDLLKNFVFGVCDCEGKWSMENFIEIEMQKIRETVGDKQVLCALSGGVDSSVVAALIHKAIGDQLTCIFVDHGLLRKGEAEGVMKTFSEGFNMNVIKVDAKDRFLNKLKGVSDPEQKRKIIGNEFIYVFDDEADKLKGIDYLAQGTLYTDIIESGTATAQTIKSHHNVGGLPEDMQFELIEPLNTLFKDEVRALGTELGLPDDIVWRQPFPGPGLGIRVLGEVTEEKLEIVRESDAILREEVANHGLERDIWQYFTVLPDIRSVGVMGDARTYDYTIGIRAVTSIDGMTSDWARIPWDVLEVISTRIVNEVKHINRVVYDITSKPPATIEWE.

In terms of domain architecture, Glutamine amidotransferase type-1 spans M8–K198. C85 serves as the catalytic Nucleophile. Catalysis depends on residues H172 and E174. Positions W199–R388 constitute a GMPS ATP-PPase domain. Residue S226–S232 coordinates ATP.

As to quaternary structure, homodimer.

It carries out the reaction XMP + L-glutamine + ATP + H2O = GMP + L-glutamate + AMP + diphosphate + 2 H(+). It functions in the pathway purine metabolism; GMP biosynthesis; GMP from XMP (L-Gln route): step 1/1. Its function is as follows. Catalyzes the synthesis of GMP from XMP. In Bacillus velezensis (strain DSM 23117 / BGSC 10A6 / LMG 26770 / FZB42) (Bacillus amyloliquefaciens subsp. plantarum), this protein is GMP synthase [glutamine-hydrolyzing].